Here is a 488-residue protein sequence, read N- to C-terminus: MTFNHKSIDELHDLLVNKEVSALELTKATLEDIKEREETVGSFITVTQEEALAQAAAIDEKGIDADNVMSGIPLAVKDNISTKNILTTAASKMLYNYKPIFDATSVEKLYGRDMIIVGKTNMDEFAMGGSTENSYFKLTKNAWNQEKVAGGSSGGSATAVASGQVRLSLGSDTGGSIRQPAAFNGVVGIKPTYGRVSRFGLIAFGSSLDQIGPFSQTVKENAQLLNVISGNDKKDSTSSQVKVPDFTQFIGKDIKGMKIALPKEYIGQGIDEKVKETILKAAKHLESLGAIVEEVSLPHSKYGVAVYYIIASSEASSNLQRFDGIRYGYRTDDYENLDDVYVNTRSEGFGEEVKRRIMLGTFSLSSGYYDAYFKKAGQVRTLIMEDFKKVFANYDLILGPTAPTVAYDLDSQHQDPVAMYLADLLTIPVNLAGLPGISIPAGFVEGLPVGMQLIGKPFAEQTIYQAAAAFEASTDYHKQQPVIFGGGN.

Catalysis depends on charge relay system residues K77 and S152. S176 (acyl-ester intermediate) is an active-site residue.

The protein belongs to the amidase family. GatA subfamily. As to quaternary structure, heterotrimer of A, B and C subunits.

It carries out the reaction L-glutamyl-tRNA(Gln) + L-glutamine + ATP + H2O = L-glutaminyl-tRNA(Gln) + L-glutamate + ADP + phosphate + H(+). In terms of biological role, allows the formation of correctly charged Gln-tRNA(Gln) through the transamidation of misacylated Glu-tRNA(Gln) in organisms which lack glutaminyl-tRNA synthetase. The reaction takes place in the presence of glutamine and ATP through an activated gamma-phospho-Glu-tRNA(Gln). This is Glutamyl-tRNA(Gln) amidotransferase subunit A from Streptococcus mutans serotype c (strain ATCC 700610 / UA159).